A 535-amino-acid chain; its full sequence is Xylan 1,3-beta-xylosidase (535 aa).

The active-site Proton acceptor is D16. E189 serves as the catalytic Proton donor.

The protein belongs to the glycosyl hydrolase 43 family.

It carries out the reaction Hydrolysis of successive xylose residues from the non-reducing termini of (1-&gt;3)-beta-D-xylans.. With respect to regulation, inhibited by Ag(+), Cu(2+), Hg(2+), Mn(2+), Pb(2+), Zn(2+) and p-chloromercuric benzoic acid. Beta-1,3-xylosidase that hydrolyzes beta-1,3-xylooligosaccharides to D-xylose. This Vibrio sp protein is Xylan 1,3-beta-xylosidase (xloA).